A 426-amino-acid chain; its full sequence is UPF0329 protein ECU06_0040 (426 aa).

Residues 136 to 172 (RQRKREEETERSVKELVGDEEKAKSKEEKAKSKEEKA) are compositionally biased toward basic and acidic residues. The segment at 136-230 (RQRKREEETE…GGKKKSKGGR (95 aa)) is disordered. A compositionally biased stretch (basic residues) spans 220–230 (KGGKKKSKGGR).

It belongs to the UPF0329 family.

This Encephalitozoon cuniculi (strain GB-M1) (Microsporidian parasite) protein is UPF0329 protein ECU06_0040.